The primary structure comprises 97 residues: Glutamyl-tRNA(Gln) amidotransferase subunit C 2 (97 aa).

Belongs to the GatC family. Heterotrimer of A, B and C subunits.

The enzyme catalyses L-glutamyl-tRNA(Gln) + L-glutamine + ATP + H2O = L-glutaminyl-tRNA(Gln) + L-glutamate + ADP + phosphate + H(+). It carries out the reaction L-aspartyl-tRNA(Asn) + L-glutamine + ATP + H2O = L-asparaginyl-tRNA(Asn) + L-glutamate + ADP + phosphate + 2 H(+). In terms of biological role, allows the formation of correctly charged Asn-tRNA(Asn) or Gln-tRNA(Gln) through the transamidation of misacylated Asp-tRNA(Asn) or Glu-tRNA(Gln) in organisms which lack either or both of asparaginyl-tRNA or glutaminyl-tRNA synthetases. The reaction takes place in the presence of glutamine and ATP through an activated phospho-Asp-tRNA(Asn) or phospho-Glu-tRNA(Gln). The chain is Glutamyl-tRNA(Gln) amidotransferase subunit C 2 (gatC2) from Clostridium acetobutylicum (strain ATCC 824 / DSM 792 / JCM 1419 / IAM 19013 / LMG 5710 / NBRC 13948 / NRRL B-527 / VKM B-1787 / 2291 / W).